The chain runs to 330 residues: Aspartate--ammonia ligase (330 aa).

This sequence belongs to the class-II aminoacyl-tRNA synthetase family. AsnA subfamily.

The protein localises to the cytoplasm. It catalyses the reaction L-aspartate + NH4(+) + ATP = L-asparagine + AMP + diphosphate + H(+). It functions in the pathway amino-acid biosynthesis; L-asparagine biosynthesis; L-asparagine from L-aspartate (ammonia route): step 1/1. This is Aspartate--ammonia ligase from Glaesserella parasuis serovar 5 (strain SH0165) (Haemophilus parasuis).